Consider the following 745-residue polypeptide: Capsid protein (745 aa).

Disordered stretches follow at residues 44–64 (RRRF…GRRK), 580–602 (SQAI…TLPR), 638–662 (EYSS…RPEG), and 678–699 (QDSQ…QAHQ). A compositionally biased stretch (acidic residues) spans 681–692 (QDSEESQEEAPL).

This sequence belongs to the anelloviridae capsid protein family.

The protein localises to the virion. Its function is as follows. Self assemble to form an icosahedral capsid. This chain is Capsid protein, found in Torque teno virus (isolate Human/China/CT23F/2001) (TTV).